The chain runs to 382 residues: Chaperone protein DnaJ (382 aa).

The region spanning 5-70 (DYYDLLGLSK…DKRAAYDRYG (66 aa)) is the J domain. A CR-type zinc finger spans residues 138–216 (GTKVPINYVT…CSGSGRVRDE (79 aa)). Zn(2+) contacts are provided by Cys-151, Cys-154, Cys-168, Cys-171, Cys-190, Cys-193, Cys-204, and Cys-207. 4 CXXCXGXG motif repeats span residues 151-158 (CSSCSGSG), 168-175 (CNTCHGAG), 190-197 (CHVCNGEG), and 204-211 (CKKCSGSG).

This sequence belongs to the DnaJ family. In terms of assembly, homodimer. Zn(2+) is required as a cofactor.

It is found in the cytoplasm. In terms of biological role, participates actively in the response to hyperosmotic and heat shock by preventing the aggregation of stress-denatured proteins and by disaggregating proteins, also in an autonomous, DnaK-independent fashion. Unfolded proteins bind initially to DnaJ; upon interaction with the DnaJ-bound protein, DnaK hydrolyzes its bound ATP, resulting in the formation of a stable complex. GrpE releases ADP from DnaK; ATP binding to DnaK triggers the release of the substrate protein, thus completing the reaction cycle. Several rounds of ATP-dependent interactions between DnaJ, DnaK and GrpE are required for fully efficient folding. Also involved, together with DnaK and GrpE, in the DNA replication of plasmids through activation of initiation proteins. The chain is Chaperone protein DnaJ from Ehrlichia ruminantium (strain Welgevonden).